Here is a 253-residue protein sequence, read N- to C-terminus: FGFR1 oncogene partner 2 homolog (253 aa).

The stretch at 5–104 forms a coiled coil; the sequence is IEKALADAKA…SALELIMSKY (100 aa). Serine 140 is modified (phosphoserine). Residues 160–223 are a coiled coil; sequence LERRHLEANQ…LREILQITRE (64 aa). The segment at 231-253 is disordered; it reads DDASESTSLSALVTNSDLSLRKS. Residues 235-253 are compositionally biased toward polar residues; sequence ESTSLSALVTNSDLSLRKS.

Belongs to the SIKE family.

The protein resides in the cytoplasm. In terms of biological role, may be involved in wound healing pathway. In Mus musculus (Mouse), this protein is FGFR1 oncogene partner 2 homolog (Fgfr1op2).